Consider the following 429-residue polypeptide: Melanoma-associated antigen 11 (429 aa).

Disordered stretches follow at residues Met1–Gly30 and Ile188–Glu215. The span at Asp194 to Pro209 shows a compositional bias: polar residues. One can recognise an MAGE domain in the interval Leu222–Ala421.

As to expression, expressed in tumors of several types, such as melanoma, head and neck squamous cell carcinoma, lung carcinoma and breast carcinoma. Expressed in testis, ovary, prostate, cancerous prostate, breast and adrenal tissue.

It is found in the nucleus. Its subcellular location is the cytoplasm. Functionally, acts as androgen receptor coregulator that increases androgen receptor activity by modulating the receptors interdomain interaction. May play a role in embryonal development and tumor transformation or aspects of tumor progression. The protein is Melanoma-associated antigen 11 of Homo sapiens (Human).